The sequence spans 319 residues: UDP-N-acetylenolpyruvoylglucosamine reductase (319 aa).

The 164-residue stretch at 35 to 198 folds into the FAD-binding PCMH-type domain; the sequence is VGGPAEAMFK…TGCVLAGRPD (164 aa). Residue Arg178 is part of the active site. The Proton donor role is filled by Ser227. Glu302 is an active-site residue.

Belongs to the MurB family. It depends on FAD as a cofactor.

The protein resides in the cytoplasm. It catalyses the reaction UDP-N-acetyl-alpha-D-muramate + NADP(+) = UDP-N-acetyl-3-O-(1-carboxyvinyl)-alpha-D-glucosamine + NADPH + H(+). It participates in cell wall biogenesis; peptidoglycan biosynthesis. In terms of biological role, cell wall formation. The protein is UDP-N-acetylenolpyruvoylglucosamine reductase of Rhodospirillum rubrum (strain ATCC 11170 / ATH 1.1.1 / DSM 467 / LMG 4362 / NCIMB 8255 / S1).